Here is a 318-residue protein sequence, read N- to C-terminus: GTP cyclohydrolase MptA (318 aa).

Belongs to the GTP cyclohydrolase IV family. Homodimer. It depends on Fe(2+) as a cofactor.

The enzyme catalyses GTP + H2O = 7,8-dihydroneopterin 2',3'-cyclic phosphate + formate + diphosphate + H(+). Its pathway is cofactor biosynthesis; 5,6,7,8-tetrahydromethanopterin biosynthesis. In terms of biological role, converts GTP to 7,8-dihydro-D-neopterin 2',3'-cyclic phosphate, the first intermediate in the biosynthesis of coenzyme methanopterin. This is GTP cyclohydrolase MptA from Methanosarcina acetivorans (strain ATCC 35395 / DSM 2834 / JCM 12185 / C2A).